The chain runs to 217 residues: Probable transaldolase (217 aa).

Lysine 83 (schiff-base intermediate with substrate) is an active-site residue.

The protein belongs to the transaldolase family. Type 3B subfamily.

The protein resides in the cytoplasm. The enzyme catalyses D-sedoheptulose 7-phosphate + D-glyceraldehyde 3-phosphate = D-erythrose 4-phosphate + beta-D-fructose 6-phosphate. Its pathway is carbohydrate degradation; pentose phosphate pathway; D-glyceraldehyde 3-phosphate and beta-D-fructose 6-phosphate from D-ribose 5-phosphate and D-xylulose 5-phosphate (non-oxidative stage): step 2/3. Transaldolase is important for the balance of metabolites in the pentose-phosphate pathway. The sequence is that of Probable transaldolase from Roseobacter denitrificans (strain ATCC 33942 / OCh 114) (Erythrobacter sp. (strain OCh 114)).